The primary structure comprises 295 residues: Ribose-phosphate pyrophosphokinase (295 aa).

ATP is bound by residues 46 to 48 (DGE) and 101 to 102 (RQ). Residues His132 and Asp171 each contribute to the Mg(2+) site. Lys194 is a catalytic residue. Positions 196 and 220 each coordinate D-ribose 5-phosphate.

This sequence belongs to the ribose-phosphate pyrophosphokinase family. Class III (archaeal) subfamily. Requires Mg(2+) as cofactor.

Its subcellular location is the cytoplasm. It catalyses the reaction D-ribose 5-phosphate + ATP = 5-phospho-alpha-D-ribose 1-diphosphate + AMP + H(+). The protein operates within metabolic intermediate biosynthesis; 5-phospho-alpha-D-ribose 1-diphosphate biosynthesis; 5-phospho-alpha-D-ribose 1-diphosphate from D-ribose 5-phosphate (route I): step 1/1. Its function is as follows. Involved in the biosynthesis of the central metabolite phospho-alpha-D-ribosyl-1-pyrophosphate (PRPP) via the transfer of pyrophosphoryl group from ATP to 1-hydroxyl of ribose-5-phosphate (Rib-5-P). This Methanosarcina mazei (strain ATCC BAA-159 / DSM 3647 / Goe1 / Go1 / JCM 11833 / OCM 88) (Methanosarcina frisia) protein is Ribose-phosphate pyrophosphokinase.